Consider the following 219-residue polypeptide: Redox-sensing transcriptional repressor Rex (219 aa).

Positions 17–56 (VYLRVLDNLVKRDIEVVSSKSLSKETGFTAEQIRKDLAFF) form a DNA-binding region, H-T-H motif. 91–96 (GAGHLG) serves as a coordination point for NAD(+).

It belongs to the transcriptional regulatory Rex family. As to quaternary structure, homodimer.

The protein localises to the cytoplasm. In terms of biological role, modulates transcription in response to changes in cellular NADH/NAD(+) redox state. The chain is Redox-sensing transcriptional repressor Rex from Natranaerobius thermophilus (strain ATCC BAA-1301 / DSM 18059 / JW/NM-WN-LF).